We begin with the raw amino-acid sequence, 407 residues long: Phosphopentomutase (407 aa).

Mn(2+)-binding residues include Asp-10, Asp-306, His-311, Asp-347, His-348, and His-359.

Belongs to the phosphopentomutase family. Mn(2+) is required as a cofactor.

It localises to the cytoplasm. It carries out the reaction 2-deoxy-alpha-D-ribose 1-phosphate = 2-deoxy-D-ribose 5-phosphate. The catalysed reaction is alpha-D-ribose 1-phosphate = D-ribose 5-phosphate. It participates in carbohydrate degradation; 2-deoxy-D-ribose 1-phosphate degradation; D-glyceraldehyde 3-phosphate and acetaldehyde from 2-deoxy-alpha-D-ribose 1-phosphate: step 1/2. Functionally, isomerase that catalyzes the conversion of deoxy-ribose 1-phosphate (dRib-1-P) and ribose 1-phosphate (Rib-1-P) to deoxy-ribose 5-phosphate (dRib-5-P) and ribose 5-phosphate (Rib-5-P), respectively. In Escherichia coli O127:H6 (strain E2348/69 / EPEC), this protein is Phosphopentomutase.